The following is a 767-amino-acid chain: Polyketide biosynthesis protein PksE (767 aa).

Positions 1-312 (MITYVFPGQG…QRNVQAGITA (312 aa)) are acyl transferase. Residues Ser-87 and His-193 contribute to the active site.

In the N-terminal section; belongs to the FabD family.

The protein resides in the cytoplasm. It carries out the reaction holo-[ACP] + malonyl-CoA = malonyl-[ACP] + CoA. It participates in antibiotic biosynthesis; bacillaene biosynthesis. Functionally, probably involved in some intermediate steps for the synthesis of the antibiotic polyketide bacillaene which is involved in secondary metabolism. Probably has an acyl transferase activity and could also have a flavin mononucleotide-dependent oxidoreductase activity. This is Polyketide biosynthesis protein PksE (pksE) from Bacillus subtilis (strain 168).